The primary structure comprises 274 residues: Isoprenyl transferase (274 aa).

The active site involves Asp49. Position 49 (Asp49) interacts with Mg(2+). Substrate contacts are provided by residues 50 to 53, Phe54, Arg62, His66, and 94 to 96; these read GNRR and STD. The active-site Proton acceptor is Asn97. Residues Arg100, Arg223, and 229-231 each bind substrate; that span reads RLS. A Mg(2+)-binding site is contributed by Glu242.

This sequence belongs to the UPP synthase family. As to quaternary structure, homodimer. The cofactor is Mg(2+).

In terms of biological role, catalyzes the condensation of isopentenyl diphosphate (IPP) with allylic pyrophosphates generating different type of terpenoids. The protein is Isoprenyl transferase of Deinococcus radiodurans (strain ATCC 13939 / DSM 20539 / JCM 16871 / CCUG 27074 / LMG 4051 / NBRC 15346 / NCIMB 9279 / VKM B-1422 / R1).